The sequence spans 484 residues: Replication-associated protein (484 aa).

A Nuclear localization signal motif is present at residues 146 to 153 (IRKYHQSV).

It is found in the host nucleus. In terms of biological role, plays an essential for the replication of viral DNA. Presumably cleaves viral genomic dsRNA replicative form to initiate rolling circle replication. The protein is Replication-associated protein of Chaetoceros (Chaetoceros sp. DNA virus 7).